The following is a 363-amino-acid chain: Cytochrome b (363 aa).

Transmembrane regions (helical) follow at residues 23–43 (FGFI…MLSF), 67–89 (WFVR…LHIM), 102–122 (SWYS…VGYV), and 164–184 (FFSI…FHLY). Residues histidine 73 and histidine 87 each contribute to the heme b site. Heme b is bound by residues histidine 168 and histidine 182. Histidine 187 provides a ligand contact to a ubiquinone. Transmembrane regions (helical) follow at residues 210-230 (VLFS…VQSG), 271-291 (VFPT…LLVL), 310-330 (VWTT…SIGK), and 332-352 (VVHV…VLFI).

Belongs to the cytochrome b family. As to quaternary structure, the main subunits of complex b-c1 are: cytochrome b, cytochrome c1 and the Rieske protein. The cofactor is heme b.

It is found in the mitochondrion inner membrane. In terms of biological role, component of the ubiquinol-cytochrome c reductase complex (complex III or cytochrome b-c1 complex) that is part of the mitochondrial respiratory chain. The b-c1 complex mediates electron transfer from ubiquinol to cytochrome c. Contributes to the generation of a proton gradient across the mitochondrial membrane that is then used for ATP synthesis. In Theileria annulata, this protein is Cytochrome b (MT-CYB).